The primary structure comprises 459 residues: Protein king tubby (459 aa).

Residues 114–205 (HELEDEESSP…SNGAGGESEG (92 aa)) form a disordered region. The span at 123–155 (PVTVIEQQQTAPHSANSTHSQRPSTTRQPSFND) shows a compositional bias: polar residues. S152 carries the post-translational modification Phosphoserine.

The protein belongs to the TUB family.

Its subcellular location is the cytoplasm. The protein localises to the nucleus. It localises to the cell projection. The protein resides in the cilium membrane. It is found in the rhabdomere. The polypeptide is Protein king tubby (Drosophila persimilis (Fruit fly)).